The primary structure comprises 380 residues: Cytochrome b (380 aa).

Helical transmembrane passes span 34–54 (FGSLLALCLATQILTGLLLAM), 78–99 (WLIRNMHANGASFFFICVYLHI), 114–134 (WNTGVLLLLTLMATAFVGYVL), and 179–199 (FFALHFLLPFLIAGLTLIHLT). His84 and His98 together coordinate heme b. His183 and His197 together coordinate heme b. His202 lines the a ubiquinone pocket. 4 helical membrane passes run 227-247 (LKDILGLMLLLLPLTTLALFS), 289-309 (LGGVLALAASVLVLFLSPLLH), 321-341 (LSQLLFWTLVANLLILTWIGS), and 348-368 (FIIIGQLASTTYFTILLVLFP).

It belongs to the cytochrome b family. The cytochrome bc1 complex contains 11 subunits: 3 respiratory subunits (MT-CYB, CYC1 and UQCRFS1), 2 core proteins (UQCRC1 and UQCRC2) and 6 low-molecular weight proteins (UQCRH/QCR6, UQCRB/QCR7, UQCRQ/QCR8, UQCR10/QCR9, UQCR11/QCR10 and a cleavage product of UQCRFS1). This cytochrome bc1 complex then forms a dimer. Heme b is required as a cofactor.

It is found in the mitochondrion inner membrane. Component of the ubiquinol-cytochrome c reductase complex (complex III or cytochrome b-c1 complex) that is part of the mitochondrial respiratory chain. The b-c1 complex mediates electron transfer from ubiquinol to cytochrome c. Contributes to the generation of a proton gradient across the mitochondrial membrane that is then used for ATP synthesis. This is Cytochrome b (MT-CYB) from Oceanodroma melania (Black storm-petrel).